The chain runs to 193 residues: Peptidyl-tRNA hydrolase (193 aa).

Tyr-14 contacts tRNA. His-19 functions as the Proton acceptor in the catalytic mechanism. The tRNA site is built by Phe-64, Asn-66, and Asn-112.

Belongs to the PTH family. In terms of assembly, monomer.

Its subcellular location is the cytoplasm. It catalyses the reaction an N-acyl-L-alpha-aminoacyl-tRNA + H2O = an N-acyl-L-amino acid + a tRNA + H(+). Hydrolyzes ribosome-free peptidyl-tRNAs (with 1 or more amino acids incorporated), which drop off the ribosome during protein synthesis, or as a result of ribosome stalling. In terms of biological role, catalyzes the release of premature peptidyl moieties from peptidyl-tRNA molecules trapped in stalled 50S ribosomal subunits, and thus maintains levels of free tRNAs and 50S ribosomes. The polypeptide is Peptidyl-tRNA hydrolase (Bartonella henselae (strain ATCC 49882 / DSM 28221 / CCUG 30454 / Houston 1) (Rochalimaea henselae)).